Reading from the N-terminus, the 723-residue chain is MKKWLVIVLIIAGIRCDGFSDQVFRTLFIGEGNACYRTFNKTHEFGCQANRENENGLIVRIDKQEDFKNLDSCWNSFYPKYSGKYWALLPVNLIRRDTISQLKSSKCLSGIVLYNSGESIHPGDESTAASHDAECPNAASDYYLQDKNEEYCERKINSRGAITRDGLMKIDWRIQMVFIDNSTDLEIIEKCYSMFNKPKEDGSSGYPYCGMSFRLANMAAGNSEICYRRGKNDAKLFQMNIDSGDAPQLCGAMHSDNIFAFPTPIPTSPTNETIITSKYMMVTARMDSFGMIPEISVGEVSVLTSIISVLAAARSMGTQIEKWQKASNTSNRNVFFAFFNGESLDYIGSGAAAYQMENGKFPQMIRSDRTHIHPIRPNELDYILEVQQIGVAKGRKYYVHVDGERYQQNKTQTDRVIDRIERGLRSHAFDLEKPSGSGDRVPPASWHSFAKADAHVQSVLLAPYGKEYEYQRVNSILDKNEWTEDEREKAIQEIEAVSTAILAAAADYVGVETDEVVAKVDKKLITTIFDCLITSNFWFDCDFMQKLDGGRYHKLFNSYGFNQKSTYISMESHTAFPTVLHWLTIFALGSDKETLNVKSEKSCSHLGQFQAFQMYTYTWQPNPYTGNFSCLKSAIVKKVMVSPAVDSQTPEEEMNTRYSTWMESVYIIESVNLYLMEDASFEYTMILIAVISALLSIFAVGRCSETTFIVDEGEPAAEGGEPL.

The first 16 residues, 1–16 (MKKWLVIVLIIAGIRC), serve as a signal peptide directing secretion. Residues 17–678 (DGFSDQVFRT…ESVNLYLMED (662 aa)) lie on the Extracellular side of the membrane. N-linked (GlcNAc...) asparagine glycans are attached at residues asparagine 40, asparagine 181, asparagine 271, asparagine 328, asparagine 409, and asparagine 627. A helical membrane pass occupies residues 679–699 (ASFEYTMILIAVISALLSIFA). The Cytoplasmic portion of the chain corresponds to 700–723 (VGRCSETTFIVDEGEPAAEGGEPL).

This sequence belongs to the nicastrin family. Component of the gamma-secretase complex, a complex probably composed of the presenilin homodimer (sel-12, hop-1 or spe-4), nicastrin (aph-2), aph-1 and pen-2.

The protein localises to the membrane. Essential subunit of the gamma-secretase complex, an endoprotease complex that catalyzes the intramembrane cleavage of integral membrane proteins such as Notch (glp-1 or lin-12). It may represents a stabilizing cofactor required for the assembly of the gamma-secretase complex. This Caenorhabditis elegans protein is Nicastrin (aph-2).